The following is a 448-amino-acid chain: Glutamyl-tRNA reductase (448 aa).

Substrate-binding positions include 52–55 (TCNR), Ser105, 110–112 (EDQ), and Gln116. Cys53 functions as the Nucleophile in the catalytic mechanism. 184–189 (GAGEMG) contributes to the NADP(+) binding site. Residues 406–435 (DPDFGGPDQATPPEFTKGMSVEDIPDGMRD) are disordered.

Belongs to the glutamyl-tRNA reductase family. As to quaternary structure, homodimer.

The catalysed reaction is (S)-4-amino-5-oxopentanoate + tRNA(Glu) + NADP(+) = L-glutamyl-tRNA(Glu) + NADPH + H(+). Its pathway is porphyrin-containing compound metabolism; protoporphyrin-IX biosynthesis; 5-aminolevulinate from L-glutamyl-tRNA(Glu): step 1/2. Functionally, catalyzes the NADPH-dependent reduction of glutamyl-tRNA(Glu) to glutamate 1-semialdehyde (GSA). The protein is Glutamyl-tRNA reductase of Haloarcula marismortui (strain ATCC 43049 / DSM 3752 / JCM 8966 / VKM B-1809) (Halobacterium marismortui).